The following is a 209-amino-acid chain: Thymidine kinase (209 aa).

Residues 16–23 (GPMFAGKT) and 90–93 (DESQ) contribute to the ATP site. Glu91 serves as the catalytic Proton acceptor.

This sequence belongs to the thymidine kinase family. In terms of assembly, homotetramer.

It localises to the cytoplasm. It catalyses the reaction thymidine + ATP = dTMP + ADP + H(+). In Aster yellows witches'-broom phytoplasma (strain AYWB), this protein is Thymidine kinase.